Here is a 372-residue protein sequence, read N- to C-terminus: Queuine tRNA-ribosyltransferase (372 aa).

The Proton acceptor role is filled by Asp-92. Substrate is bound by residues 92-96, Asp-146, Gln-188, and Gly-215; that span reads DSGGF. The tract at residues 246 to 252 is RNA binding; sequence GIGTLRE. Asp-265 serves as the catalytic Nucleophile. Positions 270-274 are RNA binding; important for wobble base 34 recognition; it reads TRLGR. Residues Cys-303, Cys-305, Cys-308, and His-334 each contribute to the Zn(2+) site.

Belongs to the queuine tRNA-ribosyltransferase family. In terms of assembly, homodimer. Within each dimer, one monomer is responsible for RNA recognition and catalysis, while the other monomer binds to the replacement base PreQ1. The cofactor is Zn(2+).

The enzyme catalyses 7-aminomethyl-7-carbaguanine + guanosine(34) in tRNA = 7-aminomethyl-7-carbaguanosine(34) in tRNA + guanine. It participates in tRNA modification; tRNA-queuosine biosynthesis. Catalyzes the base-exchange of a guanine (G) residue with the queuine precursor 7-aminomethyl-7-deazaguanine (PreQ1) at position 34 (anticodon wobble position) in tRNAs with GU(N) anticodons (tRNA-Asp, -Asn, -His and -Tyr). Catalysis occurs through a double-displacement mechanism. The nucleophile active site attacks the C1' of nucleotide 34 to detach the guanine base from the RNA, forming a covalent enzyme-RNA intermediate. The proton acceptor active site deprotonates the incoming PreQ1, allowing a nucleophilic attack on the C1' of the ribose to form the product. After dissociation, two additional enzymatic reactions on the tRNA convert PreQ1 to queuine (Q), resulting in the hypermodified nucleoside queuosine (7-(((4,5-cis-dihydroxy-2-cyclopenten-1-yl)amino)methyl)-7-deazaguanosine). This Synechococcus sp. (strain CC9311) protein is Queuine tRNA-ribosyltransferase.